Here is a 217-residue protein sequence, read N- to C-terminus: Tegument protein BKRF4 (217 aa).

The interval 1–217 is disordered; sequence MAMFLKSRGV…GNNNYNWPWL (217 aa). Residues 32–42 show a composition bias toward polar residues; that stretch reads YTLGSQASQSI. Residues 43–79 are compositionally biased toward acidic residues; the sequence is QEEDVSDTDESDYSDEDEEIDLEEEYPSDEDPSEGSD. An interaction with host histones H3/H4 region spans residues 63–64; that stretch reads DL. An interaction with host H2A/H2B region spans residues 81–84; that stretch reads DPSW. Acidic residues predominate over residues 89–102; that stretch reads SDESDYSESDEDEA. A compositionally biased stretch (low complexity) spans 106–132; the sequence is SQASRSSRVSPSTQQSSGLTPTPSFSR. The span at 136 to 145 shows a compositional bias: pro residues; the sequence is RAPPRPPAPA. Residues 208–217 show a composition bias toward polar residues; the sequence is GNNNYNWPWL.

Belongs to the lymphocryptovirus BKRF4 family. Forms a complex with the host H3/H4 dimer and histone chaperone ASF1. Also forms a complex with host H2A/H2B dimer. Interacts (via C-terminus) with BGLF2; this interaction is important for infectious virion production.

Its subcellular location is the virion tegument. It is found in the host nucleus. It localises to the host cytoplasm. The protein resides in the host perinuclear region. Histone-binding protein that binds to histones H2A/H2B, H3/H4 and cellular chromatin to overcome the host DNA damage response triggered by the viral genome ends. Interferes with histone ubiquitination and recruitment of repair proteins. This Epstein-Barr virus (strain GD1) (HHV-4) protein is Tegument protein BKRF4.